The chain runs to 102 residues: U3-aranetoxin-Ce1a (102 aa).

The N-terminal stretch at 1 to 21 is a signal peptide; it reads MKHLSIFFVFFCCICVMLCDA.

This sequence belongs to the neurotoxin 20 family. In terms of tissue distribution, expressed by the venom gland.

It localises to the secreted. The protein is U3-aranetoxin-Ce1a of Caerostris extrusa (Bark spider).